The sequence spans 258 residues: MIFVLDVGNTNTVLGVYDGDELKYHWRIETSRAKTEDEYGMTIKALLNHVGLQFSDIRGMIISSVVPPIMFALERMCLKYFHIKPLIVGPGIKTGLDIKYENPREVGADRIVNAVAGIHLYGSPLIIVDFGTATTYCYINEHKQYMGGAIAPGIMISTEALFARAAKLPRIEIARPDDIVGKNTVSAMQAGILYGYVGQVEGIVSRMKAKSKVPPKVIATGGLAPLIASESSVIDVVDPFLTLTGLKLLYEKNTEKKG.

ATP is bound at residue aspartate 6–valine 13. Substrate is bound by residues tyrosine 100 and glycine 107–arginine 110. Aspartate 109 (proton acceptor) is an active-site residue. Aspartate 129 serves as a coordination point for K(+). Position 132 (threonine 132) interacts with ATP. A substrate-binding site is contributed by threonine 184.

It belongs to the type III pantothenate kinase family. As to quaternary structure, homodimer. NH4(+) is required as a cofactor. Requires K(+) as cofactor.

Its subcellular location is the cytoplasm. It catalyses the reaction (R)-pantothenate + ATP = (R)-4'-phosphopantothenate + ADP + H(+). Its pathway is cofactor biosynthesis; coenzyme A biosynthesis; CoA from (R)-pantothenate: step 1/5. Functionally, catalyzes the phosphorylation of pantothenate (Pan), the first step in CoA biosynthesis. The chain is Type III pantothenate kinase from Geobacillus thermodenitrificans (strain NG80-2).